The following is a 231-amino-acid chain: Eukaryotic translation initiation factor 4E allele Eva1 (231 aa).

A compositionally biased stretch (basic and acidic residues) spans 1 to 20; that stretch reads MAAAEMERTTSFDAAEKLKA. The interval 1–34 is disordered; that stretch reads MAAAEMERTTSFDAAEKLKAADAGGGEVDDELEE. EIF4G-binding stretches follow at residues 56–59 and 66–102; these read HPLE and FDNPTARSRQIDWGSSLRNVYTFSTVEDFWGAYNNIH. MRNA contacts are provided by residues 74–79, Lys-106, and 124–125; these read RQIDWG and WE. Residues Cys-129 and Cys-167 are joined by a disulfide bond. The interval 150-159 is EIF4G-binding; sequence YTLLAMIGHQ. MRNA-binding positions include 174–179 and 219–223; these read RVKGEK and KRLDR.

Belongs to the eukaryotic initiation factor 4E family. EIF4F is a multi-subunit complex, the composition of which varies with external and internal environmental conditions. It is composed of at least EIF4A, EIF4E and EIF4G. EIF4E is also known to interact with other partners. In higher plants two isoforms of EIF4F have been identified, named isoform EIF4F and isoform EIF(iso)4F. Isoform EIF4F has subunits p220 and p26, whereas isoform EIF(iso)4F has subunits p82 and p28. In terms of assembly, (Microbial infection) Interacts with potyvirus viral genome-linked protein (VPg); this interaction is possible in susceptible hosts but impaired in resistant plants. In terms of processing, according to the redox status, the Cys-129-Cys-167 disulfide bridge may have a role in regulating protein function by affecting its ability to bind capped mRNA.

Its subcellular location is the nucleus. The protein localises to the cytoplasm. Functionally, component of the protein complex eIF4F, which is involved in the recognition of the mRNA cap, ATP-dependent unwinding of 5'-terminal secondary structure and recruitment of mRNA to the ribosome. Recognizes and binds the 7-methylguanosine-containing mRNA cap during an early step in the initiation of protein synthesis and facilitates ribosome binding by inducing the unwinding of the mRNAs secondary structures. Key component of recessive resistance to potyviruses. In terms of biological role, (Microbial infection) Susceptibility host factor required for viral infection (e.g. Potato virus Y (PVY)) by recruiting viral RNAs to the host ribosomal complex via an interaction with viral genome-linked protein (VPg). Displayed sequence is the allele Eva1 that confers resistance to potato virus Y (PVY) by failing to interact with the viral VPg protein. The chain is Eukaryotic translation initiation factor 4E allele Eva1 from Solanum etuberosum (Wild potato).